The sequence spans 181 residues: Large ribosomal subunit protein uL10 (181 aa).

Belongs to the universal ribosomal protein uL10 family. As to quaternary structure, part of the ribosomal stalk of the 50S ribosomal subunit. The N-terminus interacts with L11 and the large rRNA to form the base of the stalk. The C-terminus forms an elongated spine to which L12 dimers bind in a sequential fashion forming a multimeric L10(L12)X complex.

Forms part of the ribosomal stalk, playing a central role in the interaction of the ribosome with GTP-bound translation factors. This Trichormus variabilis (strain ATCC 29413 / PCC 7937) (Anabaena variabilis) protein is Large ribosomal subunit protein uL10.